Reading from the N-terminus, the 315-residue chain is Homoserine O-succinyltransferase (315 aa).

The active-site Acyl-thioester intermediate is the cysteine 142. Residues lysine 163 and serine 192 each coordinate substrate. Residue histidine 235 is the Proton acceptor of the active site. Glutamate 237 is an active-site residue. Arginine 249 serves as a coordination point for substrate.

This sequence belongs to the MetA family.

It is found in the cytoplasm. It carries out the reaction L-homoserine + succinyl-CoA = O-succinyl-L-homoserine + CoA. It participates in amino-acid biosynthesis; L-methionine biosynthesis via de novo pathway; O-succinyl-L-homoserine from L-homoserine: step 1/1. Functionally, transfers a succinyl group from succinyl-CoA to L-homoserine, forming succinyl-L-homoserine. In Tolumonas auensis (strain DSM 9187 / NBRC 110442 / TA 4), this protein is Homoserine O-succinyltransferase.